The sequence spans 154 residues: Interleukin-7 (154 aa).

Residues 1-25 (MFHVSFRYIFGIPPLILVLLPVTSS) form the signal peptide. 3 disulfide bridges follow: cysteine 27–cysteine 145, cysteine 58–cysteine 133, and cysteine 71–cysteine 116. Asparagine 94 and asparagine 115 each carry an N-linked (GlcNAc...) asparagine glycan.

Belongs to the IL-7/IL-9 family. Interacts with IL7R and CSF2RG. In terms of processing, three disulfide bonds are present.

Its subcellular location is the secreted. In terms of biological role, hematopoietic cytokine that plays an essential role in the development, expansion, and survival of naive and memory T-cells and B-cells thereby regulating the number of mature lymphocytes and maintaining lymphoid homeostasis. Mechanistically, exerts its biological effects through a receptor composed of IL7RA subunit and the cytokine receptor common subunit gamma/CSF2RG. Binding to the receptor leads to activation of various kinases including JAK1 or JAK3 depending on the cell type and subsequently propagation of signals through activation of several downstream signaling pathways including the PI3K/Akt/mTOR or the JAK-STAT5. The polypeptide is Interleukin-7 (Il7) (Mus musculus (Mouse)).